A 358-amino-acid chain; its full sequence is Phospho-N-acetylmuramoyl-pentapeptide-transferase (358 aa).

10 helical membrane passes run 27 to 47 (IYAMITALLVCFVLGPWVIRV), 73 to 93 (TMGGVMILAAIVIPTLLWADL), 97 to 117 (YIWTVLFITIGYGLIGFVDDY), 134 to 154 (MFWQVLLAGAVGTFLFLKPGF), 170 to 190 (LWFWYIPFVTLVIVGASNAVN), 197 to 217 (GLAIGPVAINAATYMLFSYVA), 233 to 253 (GAGELAVLCGAMVGAGLGFLW), 261 to 281 (VFMGDVGSLSLGGTLGAIAVI), 286 to 306 (ILLVIVGGIFVIEALSVIFQV), and 335 to 355 (KIIVRFWIITIILALVAISTL).

The protein belongs to the glycosyltransferase 4 family. MraY subfamily. It depends on Mg(2+) as a cofactor.

It localises to the cell inner membrane. The enzyme catalyses UDP-N-acetyl-alpha-D-muramoyl-L-alanyl-gamma-D-glutamyl-meso-2,6-diaminopimeloyl-D-alanyl-D-alanine + di-trans,octa-cis-undecaprenyl phosphate = di-trans,octa-cis-undecaprenyl diphospho-N-acetyl-alpha-D-muramoyl-L-alanyl-D-glutamyl-meso-2,6-diaminopimeloyl-D-alanyl-D-alanine + UMP. It participates in cell wall biogenesis; peptidoglycan biosynthesis. Its function is as follows. Catalyzes the initial step of the lipid cycle reactions in the biosynthesis of the cell wall peptidoglycan: transfers peptidoglycan precursor phospho-MurNAc-pentapeptide from UDP-MurNAc-pentapeptide onto the lipid carrier undecaprenyl phosphate, yielding undecaprenyl-pyrophosphoryl-MurNAc-pentapeptide, known as lipid I. This is Phospho-N-acetylmuramoyl-pentapeptide-transferase from Pelobacter propionicus (strain DSM 2379 / NBRC 103807 / OttBd1).